We begin with the raw amino-acid sequence, 642 residues long: Threonine--tRNA ligase (642 aa).

The region spanning 1–61 (MPVITLPDGS…ENDAQLSIIT (61 aa)) is the TGS domain. The catalytic stretch occupies residues 243-534 (DHRKIGKQLD…LTEEFAGFFP (292 aa)). The residue at position 286 (Lys286) is an N6-acetyllysine. Positions 334, 385, and 511 each coordinate Zn(2+).

The protein belongs to the class-II aminoacyl-tRNA synthetase family. Homodimer. Zn(2+) is required as a cofactor.

It is found in the cytoplasm. It carries out the reaction tRNA(Thr) + L-threonine + ATP = L-threonyl-tRNA(Thr) + AMP + diphosphate + H(+). Catalyzes the attachment of threonine to tRNA(Thr) in a two-step reaction: L-threonine is first activated by ATP to form Thr-AMP and then transferred to the acceptor end of tRNA(Thr). Also edits incorrectly charged L-seryl-tRNA(Thr). This Escherichia coli O157:H7 protein is Threonine--tRNA ligase.